The primary structure comprises 209 residues: Small ribosomal subunit protein uS4 (209 aa).

An S4 RNA-binding domain is found at 99–164 (TRLDNVVYRM…IPRVQELKEL (66 aa)).

This sequence belongs to the universal ribosomal protein uS4 family. As to quaternary structure, part of the 30S ribosomal subunit. Contacts protein S5. The interaction surface between S4 and S5 is involved in control of translational fidelity.

One of the primary rRNA binding proteins, it binds directly to 16S rRNA where it nucleates assembly of the body of the 30S subunit. Functionally, with S5 and S12 plays an important role in translational accuracy. In Natranaerobius thermophilus (strain ATCC BAA-1301 / DSM 18059 / JW/NM-WN-LF), this protein is Small ribosomal subunit protein uS4.